The primary structure comprises 397 residues: Mannonate dehydratase (397 aa).

The protein belongs to the mannonate dehydratase family. Requires Fe(2+) as cofactor. The cofactor is Mn(2+).

The catalysed reaction is D-mannonate = 2-dehydro-3-deoxy-D-gluconate + H2O. It participates in carbohydrate metabolism; pentose and glucuronate interconversion. In terms of biological role, catalyzes the dehydration of D-mannonate. The chain is Mannonate dehydratase from Yersinia pestis bv. Antiqua (strain Antiqua).